Consider the following 416-residue polypeptide: MSATPVTLKAVQSEVSAQTAKSSEAEVKRCEDLILSYSRQLAKEKDITGIRTLVESIRSFYDLVGKARASKLIRDIVEHALTIDQGVGPALDHGKKEKIDLLTNCIGWATSNKREFLRRSLQARLIRLYNDIRDFTNAQKLAQDLSKELKKLEDRELLIEVSVEESKSSFNLNNLAKAKTALLTAKTNTNSAFASPQLQASVDMQSGVLYSAEERDYKTSFSYFYEAFEGFASIGDKINATSALKYMILCKIMLNETEQLAGLLAAKEIVAYQKSPRIIAIRSMADAFRKRSLKDFVKALAEHKIELVEDKVVAVHSQNLERNMLEKEISRVIEPYSEIELSYIARVIGMTVPPVERAIARMILDKKLMGSIDQHGDTVVVYPKADAANQFTRSLKTIRELTKTVDVSYSRTKHFK.

One can recognise a PCI domain in the interval 217 to 386; that stretch reads YKTSFSYFYE…DTVVVYPKAD (170 aa).

It belongs to the proteasome subunit S9 family. Component of the lid subcomplex of the 19S proteasome regulatory particle complex (also named PA700 complex). The 26S proteasome consists of a 20S proteasome core and two 19S regulatory subunits.

In terms of biological role, component of the lid subcomplex of the 26S proteasome, a multiprotein complex involved in the ATP-dependent degradation of ubiquitinated proteins. In the complex, rpn-6.2 is required for proteasome assembly. This Caenorhabditis elegans protein is Probable 26S proteasome regulatory subunit rpn-6.2 (rpn-6.2).